A 468-amino-acid chain; its full sequence is Probable 1,4-beta-D-glucan cellobiohydrolase C (468 aa).

Residues 1–18 (MGRVSSLALALLLPAVQA) form the signal peptide. The CBM1 domain maps to 19 to 54 (QQTLWGQCGGIGWTGPTNCVAGAACSTQNPYYAQCL). 2 disulfides stabilise this stretch: Cys-26/Cys-43 and Cys-37/Cys-53. The segment at 57 to 106 (TATTSTTLTTTTRVTTTTTSTTSKSSSTGSTTTTKSTGTTTTSGSSTTIT) is thr-rich linker. The segment at 68–107 (TRVTTTTTSTTSKSSSTGSTTTTKSTGTTTTSGSSTTITS) is disordered. Residues 107–468 (SAPSGNPFSG…QLLKNANPAF (362 aa)) are catalytic. Residue Asp-198 is part of the active site. Disulfide bonds link Cys-199–Cys-258 and Cys-390–Cys-437. The Proton donor role is filled by Asp-244. The Nucleophile role is filled by Asp-423.

This sequence belongs to the glycosyl hydrolase 6 (cellulase B) family.

The protein localises to the secreted. The enzyme catalyses Hydrolysis of (1-&gt;4)-beta-D-glucosidic linkages in cellulose and cellotetraose, releasing cellobiose from the non-reducing ends of the chains.. Functionally, the biological conversion of cellulose to glucose generally requires three types of hydrolytic enzymes: (1) Endoglucanases which cut internal beta-1,4-glucosidic bonds; (2) Exocellobiohydrolases that cut the disaccharide cellobiose from the non-reducing end of the cellulose polymer chain; (3) Beta-1,4-glucosidases which hydrolyze the cellobiose and other short cello-oligosaccharides to glucose. In Aspergillus terreus (strain NIH 2624 / FGSC A1156), this protein is Probable 1,4-beta-D-glucan cellobiohydrolase C (cbhC).